A 239-amino-acid chain; its full sequence is MSNKKDIAVKISGGKKIREAREKVKSDTLYNLTNAVERLKSASYVKFDPTLEIVMKLGIDSRHSDQMVRGVVNLPAGTGKTVRVAVICKEEREEEAKSAGADLVGSTNIIDEIKAGKINFDVCIATPDVMAAIGSVARILGPKGLMPNPKLGTVTLDIKNAIKNAKSGQVEYRAEKAGIIHAGLGKLSFSDQDLLKNLNAFIEAVIKAKPAGLKGSYLKAMYLSSTMGASVQIDLTSIA.

The protein belongs to the universal ribosomal protein uL1 family. Part of the 50S ribosomal subunit.

In terms of biological role, binds directly to 23S rRNA. The L1 stalk is quite mobile in the ribosome, and is involved in E site tRNA release. Protein L1 is also a translational repressor protein, it controls the translation of the L11 operon by binding to its mRNA. This chain is Large ribosomal subunit protein uL1, found in Rickettsia rickettsii (strain Iowa).